Reading from the N-terminus, the 181-residue chain is Peptide deformylase (181 aa).

Cys103 and His145 together coordinate Fe cation. The active site involves Glu146. His149 provides a ligand contact to Fe cation.

This sequence belongs to the polypeptide deformylase family. Fe(2+) is required as a cofactor.

It catalyses the reaction N-terminal N-formyl-L-methionyl-[peptide] + H2O = N-terminal L-methionyl-[peptide] + formate. In terms of biological role, removes the formyl group from the N-terminal Met of newly synthesized proteins. Requires at least a dipeptide for an efficient rate of reaction. N-terminal L-methionine is a prerequisite for activity but the enzyme has broad specificity at other positions. The sequence is that of Peptide deformylase from Orientia tsutsugamushi (strain Boryong) (Rickettsia tsutsugamushi).